The following is a 387-amino-acid chain: MSGGKKKSSFQITSVTTDYEGPGSPGASDPPAPPAPAGPPPRLPNGEPNPDPGGRGTPRNGSPPPGAPASRFRVVKLPQGLGEPYRRGRWTCVDVYERDLEPPSFGRLLEGIRGASGGTGGRSLDSRLELASLGISTPIPQPGLSQGPTSWLRPPPTSPGPQARSFTGGLGQLAGPGKAKVETPPLSASPPQQRPPGPGTGDSAQTLPSLRVEVESGGLAAGTPPLSRRRDGAVRLRMELVAPEETGKVPPIDSRPNSPALYFDASLVHKSPDPFGAAAAQSLSLARSMLAISGHLDSDDDSGSGSLVGIDNKIEQAMDLVKSHLMFAVREEVEVLKEQIRDLAERNAALEQENGLLRALASPEQLAQLPSSGLPRLGPSAPNGPSI.

Disordered stretches follow at residues 1-85 (MSGG…GEPY) and 135-232 (ISTP…RRDG). A compositionally biased stretch (pro residues) spans 28-51 (SDPPAPPAPAGPPPRLPNGEPNPD). T57 bears the Phosphothreonine mark. Phosphoserine is present on residues S62 and S165. Phosphothreonine is present on T183. S187 and S189 each carry phosphoserine. Residue T223 is modified to Phosphothreonine. 3 positions are modified to phosphoserine: S254, S258, and S271. Residues 336-357 (LKEQIRDLAERNAALEQENGLL) form a leucine-zipper region. A Phosphoserine modification is found at S362. The disordered stretch occupies residues 368-387 (QLPSSGLPRLGPSAPNGPSI).

This sequence belongs to the TSC-22/Dip/Bun family. Forms a homodimer or heterodimer. Forms a heterodimer with TSC22D1 isoforms 1 and 2. Interacts with NRBP1.

It is found in the nucleus. The protein resides in the cytoplasm. It localises to the cell projection. Its subcellular location is the dendrite. The protein localises to the synapse. Its function is as follows. Binds DNA and acts as a transcriptional repressor. Involved in the regulation of systematic glucose homeostasis and insulin sensitivity, via transcriptional repression of downstream insulin signaling targets such as OBP2A/LCN13. Acts as a negative regulator of lipogenic gene expression in hepatocytes and thereby mediates the control of very low-density lipoprotein release. May play a role in neurite elongation and survival. The sequence is that of TSC22 domain family protein 4 from Rattus norvegicus (Rat).